The primary structure comprises 239 residues: MTLTRKTLFLLTAAFGIHSFQTASADAVVRAEKLHASANRSYKVAGKRYTPKNQVAEFTQTGNASWYGGRFHGRKTSGGERYDMNAFTAAHKTLPIPSYVRVTNTKNGKSVIVRVNDRGPFHGNRIIDVSKAAAQKLGFVNQGTAHVKIEQIVPGQSAPVAENKDIFIDLKSFGTEHEAQAYLNQAAQNLASSASNPNLSVEKRRYEYVVKMGPFASQERAAEAEAQARGMVRAVLTAG.

The N-terminal stretch at 1 to 25 is a signal peptide; that stretch reads MTLTRKTLFLLTAAFGIHSFQTASA. Residues 160 to 239 enclose the SPOR domain; that stretch reads VAENKDIFID…GMVRAVLTAG (80 aa).

This sequence belongs to the RlpA family.

Lytic transglycosylase with a strong preference for naked glycan strands that lack stem peptides. This chain is Endolytic peptidoglycan transglycosylase RlpA, found in Neisseria meningitidis serogroup A / serotype 4A (strain DSM 15465 / Z2491).